A 430-amino-acid polypeptide reads, in one-letter code: Histidine--tRNA ligase (430 aa).

This sequence belongs to the class-II aminoacyl-tRNA synthetase family. Homodimer.

Its subcellular location is the cytoplasm. It carries out the reaction tRNA(His) + L-histidine + ATP = L-histidyl-tRNA(His) + AMP + diphosphate + H(+). This is Histidine--tRNA ligase from Acinetobacter baumannii (strain AB307-0294).